The chain runs to 372 residues: MDRDKILLTPGPLTTTLRTKLAMLKDWGSWDTDFNAVTASVRRSLLDIIHGHDSHVVVPLQGSGTFSVEAAVATLVPHDGHVLVLDNGAYCKRAVRLTQLMGRRCTVLPFDEAAPVSAAALADQLKADASISHVILIHCETGAGVLNPLQEVADVCAAHGKGLIVDAMSSFAALEIDARKVRFDALVAASGKCLEGVPGMGFVFIRKAILEGCAGRSQSLAMDLYDQYIYMEKTTQWRFTPPTHVVVALAEAIAQFEEEGGQPARLARYQRNYSTLITGMARLGFRPFLDPAIQAPIIVTFHAPADSRYEFKRFYASARERGFVLYPGKLTQVETFRVGCIGAIGPREMEQAVHAIAGALQDMGISSAAPAH.

Lys-192 is subject to N6-(pyridoxal phosphate)lysine.

This sequence belongs to the class-V pyridoxal-phosphate-dependent aminotransferase family. PhnW subfamily. As to quaternary structure, homodimer. Pyridoxal 5'-phosphate is required as a cofactor.

It catalyses the reaction (2-aminoethyl)phosphonate + pyruvate = phosphonoacetaldehyde + L-alanine. In terms of biological role, involved in phosphonate degradation. The chain is 2-aminoethylphosphonate--pyruvate transaminase 2 from Polaromonas sp. (strain JS666 / ATCC BAA-500).